The sequence spans 187 residues: Protein lethal(2)essential for life (187 aa).

The sHSP domain maps to 61–170; the sequence is NSLQKQESGS…TERLVQITQT (110 aa). The segment at 151–187 is disordered; it reads APMKALPPPQTERLVQITQTGPSSKEDNAKKVETSTA. Positions 174 to 187 are enriched in basic and acidic residues; it reads SKEDNAKKVETSTA.

The protein belongs to the small heat shock protein (HSP20) family. In terms of tissue distribution, ubiquitously expressed during embryogenesis with no sign of tissue specificity in expression up to stage 16.

Vital role in embryonic development. This Drosophila melanogaster (Fruit fly) protein is Protein lethal(2)essential for life (l(2)efl).